A 78-amino-acid chain; its full sequence is Dermaseptin-B1 (78 aa).

The first 22 residues, 1–22, serve as a signal peptide directing secretion; sequence MDILKKSLFLVLFLGLVSLSIC. Residues 23 to 42 constitute a propeptide that is removed on maturation; sequence EEEKRENEDEEKQDDEQSEM. Gln75 carries the glutamine amide modification. Positions 76–78 are excised as a propeptide; it reads GEQ.

Belongs to the frog skin active peptide (FSAP) family. Dermaseptin subfamily. As to expression, expressed by the skin glands.

The protein resides in the secreted. In terms of biological role, possesses a potent antimicrobial activity against bacteria, fungi and protozoa. Probably acts by disturbing membrane functions with its amphipathic structure. The chain is Dermaseptin-B1 from Phyllomedusa bicolor (Two-colored leaf frog).